We begin with the raw amino-acid sequence, 62 residues long: Neurotoxin 3 (62 aa).

Positions 1–16 (LECHDQQSSQTPTTTG) are enriched in polar residues. The interval 1–22 (LECHDQQSSQTPTTTGCSGGET) is disordered. 4 disulfides stabilise this stretch: Cys-3/Cys-24, Cys-17/Cys-41, Cys-43/Cys-54, and Cys-55/Cys-60.

Belongs to the three-finger toxin family. Short-chain subfamily. Type I alpha-neurotoxin sub-subfamily. In terms of tissue distribution, expressed by the venom gland.

Its subcellular location is the secreted. In terms of biological role, binds to muscle nicotinic acetylcholine receptor (nAChR) and inhibit acetylcholine from binding to the receptor, thereby impairing neuromuscular transmission. This chain is Neurotoxin 3, found in Naja sputatrix (Malayan spitting cobra).